A 72-amino-acid chain; its full sequence is Translation initiation factor IF-1 (72 aa).

The S1-like domain occupies 1 to 72 (MAKEEVLEFP…TKGRITYRFK (72 aa)).

This sequence belongs to the IF-1 family. As to quaternary structure, component of the 30S ribosomal translation pre-initiation complex which assembles on the 30S ribosome in the order IF-2 and IF-3, IF-1 and N-formylmethionyl-tRNA(fMet); mRNA recruitment can occur at any time during PIC assembly.

It is found in the cytoplasm. One of the essential components for the initiation of protein synthesis. Stabilizes the binding of IF-2 and IF-3 on the 30S subunit to which N-formylmethionyl-tRNA(fMet) subsequently binds. Helps modulate mRNA selection, yielding the 30S pre-initiation complex (PIC). Upon addition of the 50S ribosomal subunit IF-1, IF-2 and IF-3 are released leaving the mature 70S translation initiation complex. This chain is Translation initiation factor IF-1, found in Brucella abortus (strain 2308).